The primary structure comprises 485 residues: Glutamyl-tRNA(Gln) amidotransferase subunit A (485 aa).

Active-site charge relay system residues include lysine 76 and serine 155. The active-site Acyl-ester intermediate is serine 179.

It belongs to the amidase family. GatA subfamily. As to quaternary structure, heterotrimer of A, B and C subunits.

The catalysed reaction is L-glutamyl-tRNA(Gln) + L-glutamine + ATP + H2O = L-glutaminyl-tRNA(Gln) + L-glutamate + ADP + phosphate + H(+). Functionally, allows the formation of correctly charged Gln-tRNA(Gln) through the transamidation of misacylated Glu-tRNA(Gln) in organisms which lack glutaminyl-tRNA synthetase. The reaction takes place in the presence of glutamine and ATP through an activated gamma-phospho-Glu-tRNA(Gln). This chain is Glutamyl-tRNA(Gln) amidotransferase subunit A, found in Marinobacter nauticus (strain ATCC 700491 / DSM 11845 / VT8) (Marinobacter aquaeolei).